Consider the following 332-residue polypeptide: Fructose-1,6-bisphosphatase class 1 (332 aa).

4 residues coordinate Mg(2+): Glu-89, Asp-110, Leu-112, and Asp-113. Substrate-binding positions include 113–116 (DGSS), Asn-206, Tyr-239, 257–259 (YLY), and Lys-269. Mg(2+) is bound at residue Glu-275.

This sequence belongs to the FBPase class 1 family. In terms of assembly, homotetramer. Mg(2+) serves as cofactor.

It localises to the cytoplasm. It carries out the reaction beta-D-fructose 1,6-bisphosphate + H2O = beta-D-fructose 6-phosphate + phosphate. Its pathway is carbohydrate biosynthesis; gluconeogenesis. The polypeptide is Fructose-1,6-bisphosphatase class 1 (Klebsiella pneumoniae subsp. pneumoniae (strain ATCC 700721 / MGH 78578)).